The primary structure comprises 346 residues: MVDALREANTASQSERRETLLTPRFYTTDFEALAKLDISAMEADFEALLAEFQADYNREHFQRDAGFVEQAHQIDPQWRALMLEFLERSCTSEFSGFLLYKEISRRLKAANPLLAECFKAMSRDEARHAGFLNKAMGDYDLGLDLSNLAKQKKYTFFKPKFIFYATYLSEKIGYWRYIAIFRHLERHPENRIHPLFNYFKNWCQDENRHGDFFGLILKSQPQLLKGPINRLWVRFFLLSFCLTMYLNDRKPHNLYSALGLDASHYAMEVLRQTNLDSGKVFPLILDLDNPRFQRHLDRCADLNLQLEALSGKSPLARLPVIAALAGTIAQLFLLKPVAPPAPEMVR.

The protein belongs to the AcsF family. The cofactor is Fe cation.

It catalyses the reaction Mg-protoporphyrin IX 13-monomethyl ester + 3 NADPH + 3 O2 + 2 H(+) = 3,8-divinyl protochlorophyllide a + 3 NADP(+) + 5 H2O. The protein operates within porphyrin-containing compound metabolism; chlorophyll biosynthesis (light-independent). In terms of biological role, catalyzes the formation of the isocyclic ring in chlorophyll biosynthesis. Mediates the cyclase reaction, which results in the formation of divinylprotochlorophyllide (Pchlide) characteristic of all chlorophylls from magnesium-protoporphyrin IX 13-monomethyl ester (MgPMME). This Gloeobacter violaceus (strain ATCC 29082 / PCC 7421) protein is Magnesium-protoporphyrin IX monomethyl ester [oxidative] cyclase.